The chain runs to 509 residues: UDP-N-acetylmuramoyl-L-alanyl-D-glutamate--2,6-diaminopimelate ligase (509 aa).

Ser-30 contributes to the UDP-N-acetyl-alpha-D-muramoyl-L-alanyl-D-glutamate binding site. 110-116 contributes to the ATP binding site; the sequence is GTNGKTT. UDP-N-acetyl-alpha-D-muramoyl-L-alanyl-D-glutamate-binding positions include 152-153, Ser-179, Gln-185, and Arg-187; that span reads TT. An N6-carboxylysine modification is found at Lys-219. Meso-2,6-diaminopimelate-binding positions include Arg-385, 409–412, Gly-476, and Glu-480; that span reads DNPR. A Meso-diaminopimelate recognition motif motif is present at residues 409-412; that stretch reads DNPR.

It belongs to the MurCDEF family. MurE subfamily. Requires Mg(2+) as cofactor. Carboxylation is probably crucial for Mg(2+) binding and, consequently, for the gamma-phosphate positioning of ATP.

The protein resides in the cytoplasm. The enzyme catalyses UDP-N-acetyl-alpha-D-muramoyl-L-alanyl-D-glutamate + meso-2,6-diaminopimelate + ATP = UDP-N-acetyl-alpha-D-muramoyl-L-alanyl-gamma-D-glutamyl-meso-2,6-diaminopimelate + ADP + phosphate + H(+). It functions in the pathway cell wall biogenesis; peptidoglycan biosynthesis. Catalyzes the addition of meso-diaminopimelic acid to the nucleotide precursor UDP-N-acetylmuramoyl-L-alanyl-D-glutamate (UMAG) in the biosynthesis of bacterial cell-wall peptidoglycan. In Geobacter sulfurreducens (strain ATCC 51573 / DSM 12127 / PCA), this protein is UDP-N-acetylmuramoyl-L-alanyl-D-glutamate--2,6-diaminopimelate ligase.